The chain runs to 131 residues: Large ribosomal subunit protein eL14 (131 aa).

The protein belongs to the eukaryotic ribosomal protein eL14 family. In terms of assembly, component of the large ribosomal subunit. Mature ribosomes consist of a small (40S) and a large (60S) subunit. The 40S subunit contains about 32 different proteins and 1 molecule of RNA (18S). The 60S subunit contains 45 different proteins and 3 molecules of RNA (25S, 5.8S and 5S).

It localises to the cytoplasm. Its function is as follows. Component of the ribosome, a large ribonucleoprotein complex responsible for the synthesis of proteins in the cell. The small ribosomal subunit (SSU) binds messenger RNAs (mRNAs) and translates the encoded message by selecting cognate aminoacyl-transfer RNA (tRNA) molecules. The large subunit (LSU) contains the ribosomal catalytic site termed the peptidyl transferase center (PTC), which catalyzes the formation of peptide bonds, thereby polymerizing the amino acids delivered by tRNAs into a polypeptide chain. The nascent polypeptides leave the ribosome through a tunnel in the LSU and interact with protein factors that function in enzymatic processing, targeting, and the membrane insertion of nascent chains at the exit of the ribosomal tunnel. This is Large ribosomal subunit protein eL14 from Candida albicans (strain SC5314 / ATCC MYA-2876) (Yeast).